Consider the following 493-residue polypeptide: Uridine 5'-monophosphate synthase (493 aa).

The segment at 1 to 207 (MVAQNSDKMR…VAKYIAAVQI (207 aa)) is OPRTase. The domain linker stretch occupies residues 208 to 233 (NSDGTFVGGDKGDVVRANDLQRTKLT). The OMPdecase stretch occupies residues 234–493 (YENRANLAKS…WAAYQDRVAK (260 aa)). Lys320 is a catalytic residue.

In the N-terminal section; belongs to the purine/pyrimidine phosphoribosyltransferase family. This sequence in the C-terminal section; belongs to the OMP decarboxylase family.

The enzyme catalyses orotidine 5'-phosphate + diphosphate = orotate + 5-phospho-alpha-D-ribose 1-diphosphate. It carries out the reaction orotidine 5'-phosphate + H(+) = UMP + CO2. Its pathway is pyrimidine metabolism; UMP biosynthesis via de novo pathway; UMP from orotate: step 1/2. It participates in pyrimidine metabolism; UMP biosynthesis via de novo pathway; UMP from orotate: step 2/2. The protein is Uridine 5'-monophosphate synthase (r-l) of Drosophila melanogaster (Fruit fly).